Here is a 556-residue protein sequence, read N- to C-terminus: Trigger factor (556 aa).

One can recognise a PPIase FKBP-type domain in the interval 169–255; that stretch reads GDVVVIDFAA…LREIKAKELP (87 aa). Positions 438-452 are enriched in polar residues; the sequence is VDSEGNPTQAPTSLA. Residues 438–556 form a disordered region; the sequence is VDSEGNPTQA…KPSKKDKKGK (119 aa). Positions 461 to 472 are enriched in acidic residues; the sequence is PEAEFEADEPEA. Composition is skewed to low complexity over residues 486–503 and 511–526; these read ETAT…AEAE and EASP…AEAT.

It belongs to the FKBP-type PPIase family. Tig subfamily.

The protein resides in the cytoplasm. The enzyme catalyses [protein]-peptidylproline (omega=180) = [protein]-peptidylproline (omega=0). In terms of biological role, involved in protein export. Acts as a chaperone by maintaining the newly synthesized protein in an open conformation. Functions as a peptidyl-prolyl cis-trans isomerase. This chain is Trigger factor, found in Synechococcus sp. (strain JA-2-3B'a(2-13)) (Cyanobacteria bacterium Yellowstone B-Prime).